A 155-amino-acid chain; its full sequence is Regulatory protein RecX (155 aa).

It belongs to the RecX family.

Its subcellular location is the cytoplasm. In terms of biological role, modulates RecA activity. The polypeptide is Regulatory protein RecX (Pseudomonas savastanoi pv. phaseolicola (strain 1448A / Race 6) (Pseudomonas syringae pv. phaseolicola (strain 1448A / Race 6))).